Consider the following 306-residue polypeptide: Metal ABC transporter substrate-binding lipoprotein SloC (306 aa).

The first 19 residues, 1–19 (MKKLSLLLLVCLSLLGLFA), serve as a signal peptide directing secretion. Cysteine 20 carries the N-palmitoyl cysteine lipid modification. Residue cysteine 20 is the site of S-diacylglycerol cysteine attachment. A divalent metal cation contacts are provided by histidine 64, histidine 136, glutamate 202, and aspartate 277.

The protein belongs to the bacterial solute-binding protein 9 family. Lipoprotein receptor antigen (Lrai) subfamily.

Its subcellular location is the cell membrane. Functionally, part of the ATP-binding cassette (ABC) transport system SloABC involved in metal import. Binds a metal with high affinity and specificity and delivers it to the membrane permease for translocation into the cytoplasm. May act as an adhesin which is involved on adherence to extracellular matrix. It is an important factor in pathogenesis and infection. May contribute to the formation and accumulation of dental plaque. This chain is Metal ABC transporter substrate-binding lipoprotein SloC (sloC), found in Streptococcus mutans serotype c (strain ATCC 700610 / UA159).